The primary structure comprises 106 residues: Urease subunit beta (106 aa).

This sequence belongs to the urease beta subunit family. In terms of assembly, heterotrimer of UreA (gamma), UreB (beta) and UreC (alpha) subunits. Three heterotrimers associate to form the active enzyme.

The protein resides in the cytoplasm. The enzyme catalyses urea + 2 H2O + H(+) = hydrogencarbonate + 2 NH4(+). It participates in nitrogen metabolism; urea degradation; CO(2) and NH(3) from urea (urease route): step 1/1. This chain is Urease subunit beta, found in Prochlorococcus marinus (strain AS9601).